The chain runs to 218 residues: Protein-methionine-sulfoxide reductase heme-binding subunit MsrQ (218 aa).

The next 5 membrane-spanning stretches (helical) occupy residues Val8–Trp28, Phe60–Ile80, Leu86–Leu106, Pro121–Thr141, and Val155–Lys175.

The protein belongs to the MsrQ family. Heterodimer of a catalytic subunit (MsrP) and a heme-binding subunit (MsrQ). It depends on FMN as a cofactor. Heme b serves as cofactor.

Its subcellular location is the cell inner membrane. Part of the MsrPQ system that repairs oxidized periplasmic proteins containing methionine sulfoxide residues (Met-O), using respiratory chain electrons. Thus protects these proteins from oxidative-stress damage caused by reactive species of oxygen and chlorine generated by the host defense mechanisms. MsrPQ is essential for the maintenance of envelope integrity under bleach stress, rescuing a wide series of structurally unrelated periplasmic proteins from methionine oxidation. MsrQ provides electrons for reduction to the reductase catalytic subunit MsrP, using the quinone pool of the respiratory chain. The protein is Protein-methionine-sulfoxide reductase heme-binding subunit MsrQ of Xanthomonas oryzae pv. oryzae (strain MAFF 311018).